The sequence spans 270 residues: 5'-AMP-activated protein kinase subunit beta-1 (270 aa).

Residues 1–44 form a disordered region; it reads MGNTSSERAALDRQGGHKTPRRDSSGGSKDGDRPKILMDSPEDA. G2 carries N-myristoyl glycine lipidation. T4 is subject to Phosphothreonine. A phosphoserine mark is found at S5 and S6. Residues 9–36 show a composition bias toward basic and acidic residues; it reads AALDRQGGHKTPRRDSSGGSKDGDRPKI. T19 is modified (phosphothreonine). Phosphoserine; by autocatalysis is present on residues S24 and S25. A phosphoserine mark is found at S40, S96, and S101. Positions 68–163 are glycogen-binding domain; that stretch reads EVNDKAPAQA…QVKKTDFEVF (96 aa). A Phosphoserine; by autocatalysis modification is found at S108. Phosphothreonine is present on T148. S182 is subject to Phosphoserine. K201 bears the N6-succinyllysine mark.

The protein belongs to the 5'-AMP-activated protein kinase beta subunit family. In terms of assembly, AMPK is a heterotrimer of an alpha catalytic subunit (PRKAA1 or PRKAA2), a beta (PRKAB1 or PRKAB2) and a gamma non-catalytic subunits (PRKAG1, PRKAG2 or PRKAG3). Interacts with FNIP1 and FNIP2. Post-translationally, phosphorylated when associated with the catalytic subunit (PRKAA1 or PRKAA2). Phosphorylated by ULK1; leading to negatively regulate AMPK activity and suggesting the existence of a regulatory feedback loop between ULK1 and AMPK.

Functionally, non-catalytic subunit of AMP-activated protein kinase (AMPK), an energy sensor protein kinase that plays a key role in regulating cellular energy metabolism. In response to reduction of intracellular ATP levels, AMPK activates energy-producing pathways and inhibits energy-consuming processes: inhibits protein, carbohydrate and lipid biosynthesis, as well as cell growth and proliferation. AMPK acts via direct phosphorylation of metabolic enzymes, and by longer-term effects via phosphorylation of transcription regulators. Also acts as a regulator of cellular polarity by remodeling the actin cytoskeleton; probably by indirectly activating myosin. Beta non-catalytic subunit acts as a scaffold on which the AMPK complex assembles, via its C-terminus that bridges alpha (PRKAA1 or PRKAA2) and gamma subunits (PRKAG1, PRKAG2 or PRKAG3). The polypeptide is 5'-AMP-activated protein kinase subunit beta-1 (PRKAB1) (Bos taurus (Bovine)).